Consider the following 288-residue polypeptide: Polyamine aminopropyltransferase (288 aa).

The PABS domain maps to 9-238 (ETLHDQFGQY…GIMTFAWATD (230 aa)). Q33 provides a ligand contact to S-methyl-5'-thioadenosine. 2 residues coordinate spermidine: H64 and D88. S-methyl-5'-thioadenosine is bound by residues E108 and 140–141 (DG). D158 (proton acceptor) is an active-site residue. Residue 158–161 (DCTD) participates in spermidine binding. Position 165 (P165) interacts with S-methyl-5'-thioadenosine.

This sequence belongs to the spermidine/spermine synthase family. Homodimer or homotetramer.

The protein localises to the cytoplasm. The catalysed reaction is S-adenosyl 3-(methylsulfanyl)propylamine + putrescine = S-methyl-5'-thioadenosine + spermidine + H(+). It functions in the pathway amine and polyamine biosynthesis; spermidine biosynthesis; spermidine from putrescine: step 1/1. In terms of biological role, catalyzes the irreversible transfer of a propylamine group from the amino donor S-adenosylmethioninamine (decarboxy-AdoMet) to putrescine (1,4-diaminobutane) to yield spermidine. This Shigella boydii serotype 18 (strain CDC 3083-94 / BS512) protein is Polyamine aminopropyltransferase.